The following is a 399-amino-acid chain: Phosphoglycerate kinase (399 aa).

Substrate contacts are provided by residues 22 to 24 (DFN), R38, 61 to 64 (HLGR), R120, and R153. Residues K204, E326, and 352–355 (GGDT) contribute to the ATP site.

It belongs to the phosphoglycerate kinase family. Monomer.

The protein localises to the cytoplasm. It carries out the reaction (2R)-3-phosphoglycerate + ATP = (2R)-3-phospho-glyceroyl phosphate + ADP. Its pathway is carbohydrate degradation; glycolysis; pyruvate from D-glyceraldehyde 3-phosphate: step 2/5. This chain is Phosphoglycerate kinase, found in Geobacter sp. (strain M21).